We begin with the raw amino-acid sequence, 97 residues long: Mapk-regulated corepressor-interacting protein 1 (97 aa).

Positions Met-1–Phe-29 are disordered. The span at Arg-15–Ser-26 shows a compositional bias: low complexity. Ser-21 bears the Phosphoserine mark. Residue Thr-30 is modified to Phosphothreonine. Phosphotyrosine is present on Tyr-41. An N6-acetyllysine modification is found at Lys-79. The short motif at Pro-80–Ser-84 is the PXDLS motif element.

The protein belongs to the MCRIP family. In terms of assembly, interacts (unphosphorylated form, via the PXDLS motif) with CTBP1, competitively inhibiting CTBP-ZEB1 interaction. Interacts with CTBP2. Interacts with MCRIP2. Interacts with DDX6. Phosphorylation by MAPK3/1 (ERK1/2) regulates MCRIP1 binding to CTBP(s). In terms of tissue distribution, widely expressed (at protein level).

The protein resides in the nucleus. Its subcellular location is the cytoplasm. It is found in the stress granule. In terms of biological role, the phosphorylation status of MCRIP1 functions as a molecular switch to regulate epithelial-mesenchymal transition. Unphosphorylated MCRIP1 binds to and inhibits the transcriptional corepressor CTBP(s). When phosphorylated by MAPK/ERK, MCRIP1 releases CTBP(s) resulting in transcriptional silencing of the E-cadherin gene and induction of epithelial-mesenchymal transition. The protein is Mapk-regulated corepressor-interacting protein 1 (Mcrip1) of Mus musculus (Mouse).